Reading from the N-terminus, the 102-residue chain is Protein translation factor SUI1 homolog (102 aa).

Belongs to the SUI1 family.

In Methanococcus maripaludis (strain C5 / ATCC BAA-1333), this protein is Protein translation factor SUI1 homolog.